An 88-amino-acid polypeptide reads, in one-letter code: UPF0250 protein Sama_2593 (88 aa).

The protein belongs to the UPF0250 family.

The polypeptide is UPF0250 protein Sama_2593 (Shewanella amazonensis (strain ATCC BAA-1098 / SB2B)).